A 515-amino-acid chain; its full sequence is UBP3-associated protein BRE5 (515 aa).

Residues 8-140 (ICFAFLQNYY…FDITNDIIRF (133 aa)) enclose the NTF2 domain. Positions 157 to 166 (QSNEENSVSA) are enriched in low complexity. 2 disordered regions span residues 157 to 410 (QSNE…PVFS) and 485 to 515 (KTVK…KRKD). The segment covering 168–201 (EEDKIRHESGVEKEKEKEKSPEISKPKAKKETVK) has biased composition (basic and acidic residues). Position 187 is a phosphoserine (serine 187). Polar residues predominate over residues 202–213 (DTTAPTESSTQE). Composition is skewed to basic and acidic residues over residues 262-282 (LNEK…KEGS) and 299-319 (EVSD…EIKP). Serine 282 is subject to Phosphoserine. Residues 330 to 341 (SGNNASTPSSSP) are compositionally biased toward polar residues. At threonine 336 the chain carries Phosphothreonine. Serine 340 carries the phosphoserine modification. Positions 374–396 (IRPETLPKKPTERKFEMGNRRDN) are enriched in basic and acidic residues. Position 398 is a phosphoserine (serine 398). Residues 418–494 (YPIYIRGTNG…KTVKKPTSNN (77 aa)) enclose the RRM domain. Positions 489 to 503 (KPTSNNPPGIFTNGT) are enriched in polar residues. The span at 504–515 (RSHRKQPLKRKD) shows a compositional bias: basic residues.

In terms of assembly, heterotetramer with UBP3; contains two molecules of BRE5 and two molecules of UBP3. Forms a complex composed of CDC48, DOA1, deubiquitinase UBP3 and probably BRE5. Within the complex, interacts (via C-terminus) with CDC48; the interaction is direct and UBP3-independent.

In terms of biological role, has a role in de-ubiquitination. In conjunction with UBP3, cleaves ubiquitin, leading to the subsequent mono-ubiquitination of sec23. This is UBP3-associated protein BRE5 (BRE5) from Saccharomyces cerevisiae (strain ATCC 204508 / S288c) (Baker's yeast).